The primary structure comprises 95 residues: Protein TusB (95 aa).

It belongs to the DsrH/TusB family. In terms of assembly, heterohexamer, formed by a dimer of trimers. The hexameric TusBCD complex contains 2 copies each of TusB, TusC and TusD. The TusBCD complex interacts with TusE.

It is found in the cytoplasm. Its function is as follows. Part of a sulfur-relay system required for 2-thiolation of 5-methylaminomethyl-2-thiouridine (mnm(5)s(2)U) at tRNA wobble positions. This chain is Protein TusB, found in Pectobacterium carotovorum subsp. carotovorum (strain PC1).